The primary structure comprises 528 residues: Na(+)/H(+) antiporter NhaB (528 aa).

Transmembrane regions (helical) follow at residues 29-49, 52-72, 95-115, 139-159, 203-223, 248-268, 304-324, 349-369, 390-410, 448-468, and 476-496; these read LIINPIVFYINPFVAGWLLVI, IFTLAMALKCYPLQPGGLLAI, VLLLLVFMVAGIYFMKQLLLF, AFLSAFLDALTVIAVIIAVAV, LLMHAGVGTALGGVCTMVGEP, VPVFFAGIFTCFLVEKFKIFG, AFIGIWLIVGLALHLASVGLI, EEALPFTALLAVFFAVVAVII, LVIFYIANGLLSMVSDNVFVG, ATPNGQAAFLFLLTSAIAPLI, and VWMALPYTIVLSIVGVLAIEL.

Belongs to the NhaB Na(+)/H(+) (TC 2.A.34) antiporter family.

It localises to the cell inner membrane. The catalysed reaction is 2 Na(+)(in) + 3 H(+)(out) = 2 Na(+)(out) + 3 H(+)(in). Na(+)/H(+) antiporter that extrudes sodium in exchange for external protons. The polypeptide is Na(+)/H(+) antiporter NhaB (Shewanella woodyi (strain ATCC 51908 / MS32)).